The primary structure comprises 420 residues: Serine hydroxymethyltransferase (420 aa).

(6S)-5,6,7,8-tetrahydrofolate-binding positions include leucine 121 and 125–127 (GHL). An N6-(pyridoxal phosphate)lysine modification is found at lysine 230. (6S)-5,6,7,8-tetrahydrofolate is bound by residues glutamate 246 and 354–356 (SPF).

Belongs to the SHMT family. In terms of assembly, homodimer. Pyridoxal 5'-phosphate is required as a cofactor.

It is found in the cytoplasm. It catalyses the reaction (6R)-5,10-methylene-5,6,7,8-tetrahydrofolate + glycine + H2O = (6S)-5,6,7,8-tetrahydrofolate + L-serine. It participates in one-carbon metabolism; tetrahydrofolate interconversion. It functions in the pathway amino-acid biosynthesis; glycine biosynthesis; glycine from L-serine: step 1/1. In terms of biological role, catalyzes the reversible interconversion of serine and glycine with tetrahydrofolate (THF) serving as the one-carbon carrier. This reaction serves as the major source of one-carbon groups required for the biosynthesis of purines, thymidylate, methionine, and other important biomolecules. Also exhibits THF-independent aldolase activity toward beta-hydroxyamino acids, producing glycine and aldehydes, via a retro-aldol mechanism. The chain is Serine hydroxymethyltransferase from Rickettsia typhi (strain ATCC VR-144 / Wilmington).